Consider the following 592-residue polypeptide: Signal peptide peptidase-like 2B (592 aa).

A signal peptide spans 1–25 (MAAAVAAALARLLAAFLLLAAQVAC). The Lumenal segment spans residues 26-174 (EYGMVHVVSQ…APKEPVLDYN (149 aa)). In terms of domain architecture, PA spans 71 to 149 (TASLLCSAAD…VALLSYKDML (79 aa)). N-linked (GlcNAc...) asparagine glycosylation is found at N97 and N129. A helical transmembrane segment spans residues 175–195 (MVIIFIMAVGTVAIGGYWAGS). Over 196–221 (RDVKKRYMKHKRDDGPEKQEDEAVDV) the chain is Cytoplasmic. The helical transmembrane segment at 222-244 (TPVMTCVFVVMCCSMLVLLYYFY) threads the bilayer. Residues 245–248 (DLLV) are Lumenal-facing. Residues 249 to 271 (YVVIGIFCLASATGLYSCLAPCV) traverse the membrane as a helical segment. The Cytoplasmic portion of the chain corresponds to 272–293 (RRLPFGKCRIPNNSLPYFHKRP). The helical transmembrane segment at 294 to 314 (QARMLLLALFCVAVSVVWGVF) threads the bilayer. At 315–319 (RNEDQ) the chain is on the lumenal side. A helical membrane pass occupies residues 320 to 340 (WAWVLQDALGIAFCLYMLKTI). The Cytoplasmic segment spans residues 341–348 (RLPTFKAC). Residues 349 to 369 (TLLLLVLFLYDIFFVFITPFL) form a helical membrane-spanning segment. D359 is a catalytic residue. The Lumenal segment spans residues 370–412 (TKSGSSIMVEVATGPSDSATREKLPMVLKVPRLNSSPLALCDR). A helical membrane pass occupies residues 413–433 (PFSLLGFGDILVPGLLVAYCH). The active site involves D421. Residues 434–445 (RFDIQVQSSRVY) are Cytoplasmic-facing. Residues 446–466 (FVACTIAYGVGLLVTFVALAL) form a helical membrane-spanning segment. Topologically, residues 467 to 470 (MQRG) are lumenal. A helical membrane pass occupies residues 471–491 (QPALLYLVPCTLVTSCAVALW). The PAL motif lies at 472-474 (PAL). The Cytoplasmic portion of the chain corresponds to 492–592 (RRELGVFWTG…SPVTQPGASA (101 aa)). Residues 512-524 (PWAPAPADGPQPP) show a composition bias toward pro residues. Residues 512 to 592 (PWAPAPADGP…SPVTQPGASA (81 aa)) form a disordered region. Residues 580 to 592 (AQPSPVTQPGASA) show a composition bias toward polar residues.

The protein belongs to the peptidase A22B family. As to quaternary structure, monomer. Homodimer. Interacts with ITM2B. Interacts with TNF. Interacts with the simian foamy virus envelope glycoprotein gp130 and its processed leader peptide gp18LP; preferentially interacts with the leader peptide gp18LP. Glycosylated. As to expression, expressed predominantly in adrenal cortex and mammary gland.

Its subcellular location is the cell membrane. The protein resides in the golgi apparatus membrane. It localises to the lysosome membrane. The protein localises to the endosome membrane. It is found in the membrane. Intramembrane-cleaving aspartic protease (I-CLiP) that cleaves type II membrane signal peptides in the hydrophobic plane of the membrane. Functions in ITM2B and TNF processing. Catalyzes the intramembrane cleavage of the anchored fragment of shed TNF-alpha (TNF), which promotes the release of the intracellular domain (ICD) for signaling to the nucleus. May play a role in the regulation of innate and adaptive immunity. Catalyzes the intramembrane cleavage of the simian foamy virus processed leader peptide gp18 of the envelope glycoprotein gp130 dependently of prior ectodomain shedding by furin or furin-like proprotein convertase (PC)-mediated cleavage proteolysis. The polypeptide is Signal peptide peptidase-like 2B (Homo sapiens (Human)).